Consider the following 91-residue polypeptide: Small ribosomal subunit protein bS20 (91 aa).

The tract at residues methionine 1–serine 23 is disordered. The segment covering alanine 7 to histidine 20 has biased composition (basic residues).

Belongs to the bacterial ribosomal protein bS20 family.

Functionally, binds directly to 16S ribosomal RNA. This Pseudomonas paraeruginosa (strain DSM 24068 / PA7) (Pseudomonas aeruginosa (strain PA7)) protein is Small ribosomal subunit protein bS20.